A 455-amino-acid chain; its full sequence is Bifunctional protein GlmU (455 aa).

Residues 1 to 227 (MGLSVIILAA…CEEVQGVNDR (227 aa)) are pyrophosphorylase. UDP-N-acetyl-alpha-D-glucosamine contacts are provided by residues 8–11 (LAAG), K22, Q73, 78–79 (GT), 100–102 (YGD), G137, E152, N167, and N225. Residue D102 participates in Mg(2+) binding. N225 is a Mg(2+) binding site. Positions 228–248 (WELTKLERYYQRLMAKKLSLA) are linker. Positions 249-455 (GVTIIDPERF…KGWHRPTKKE (207 aa)) are N-acetyltransferase. UDP-N-acetyl-alpha-D-glucosamine-binding residues include R332 and K350. Residue H362 is the Proton acceptor of the active site. UDP-N-acetyl-alpha-D-glucosamine-binding residues include Y365 and N376. Acetyl-CoA-binding positions include A379, 385–386 (NY), S404, A422, and R439.

In the N-terminal section; belongs to the N-acetylglucosamine-1-phosphate uridyltransferase family. It in the C-terminal section; belongs to the transferase hexapeptide repeat family. Homotrimer. The cofactor is Mg(2+).

It localises to the cytoplasm. The enzyme catalyses alpha-D-glucosamine 1-phosphate + acetyl-CoA = N-acetyl-alpha-D-glucosamine 1-phosphate + CoA + H(+). It catalyses the reaction N-acetyl-alpha-D-glucosamine 1-phosphate + UTP + H(+) = UDP-N-acetyl-alpha-D-glucosamine + diphosphate. Its pathway is nucleotide-sugar biosynthesis; UDP-N-acetyl-alpha-D-glucosamine biosynthesis; N-acetyl-alpha-D-glucosamine 1-phosphate from alpha-D-glucosamine 6-phosphate (route II): step 2/2. It functions in the pathway nucleotide-sugar biosynthesis; UDP-N-acetyl-alpha-D-glucosamine biosynthesis; UDP-N-acetyl-alpha-D-glucosamine from N-acetyl-alpha-D-glucosamine 1-phosphate: step 1/1. It participates in bacterial outer membrane biogenesis; LPS lipid A biosynthesis. Functionally, catalyzes the last two sequential reactions in the de novo biosynthetic pathway for UDP-N-acetylglucosamine (UDP-GlcNAc). The C-terminal domain catalyzes the transfer of acetyl group from acetyl coenzyme A to glucosamine-1-phosphate (GlcN-1-P) to produce N-acetylglucosamine-1-phosphate (GlcNAc-1-P), which is converted into UDP-GlcNAc by the transfer of uridine 5-monophosphate (from uridine 5-triphosphate), a reaction catalyzed by the N-terminal domain. This Coxiella burnetii (strain Dugway 5J108-111) protein is Bifunctional protein GlmU.